A 226-amino-acid chain; its full sequence is Thymidylate kinase (226 aa).

ATP is bound at residue 9 to 16 (GPEGSGKS).

It belongs to the thymidylate kinase family.

It catalyses the reaction dTMP + ATP = dTDP + ADP. Functionally, phosphorylation of dTMP to form dTDP in both de novo and salvage pathways of dTTP synthesis. In Roseiflexus sp. (strain RS-1), this protein is Thymidylate kinase.